Here is a 553-residue protein sequence, read N- to C-terminus: Dihydroxy-acid dehydratase (553 aa).

Asp78 is a binding site for Mg(2+). Cys119 lines the [2Fe-2S] cluster pocket. Mg(2+) contacts are provided by Asp120 and Lys121. N6-carboxylysine is present on Lys121. Cys193 is a [2Fe-2S] cluster binding site. Glu441 contributes to the Mg(2+) binding site. The active-site Proton acceptor is Ser467.

This sequence belongs to the IlvD/Edd family. As to quaternary structure, homodimer. [2Fe-2S] cluster serves as cofactor. The cofactor is Mg(2+).

The catalysed reaction is (2R)-2,3-dihydroxy-3-methylbutanoate = 3-methyl-2-oxobutanoate + H2O. It carries out the reaction (2R,3R)-2,3-dihydroxy-3-methylpentanoate = (S)-3-methyl-2-oxopentanoate + H2O. The protein operates within amino-acid biosynthesis; L-isoleucine biosynthesis; L-isoleucine from 2-oxobutanoate: step 3/4. It participates in amino-acid biosynthesis; L-valine biosynthesis; L-valine from pyruvate: step 3/4. In terms of biological role, functions in the biosynthesis of branched-chain amino acids. Catalyzes the dehydration of (2R,3R)-2,3-dihydroxy-3-methylpentanoate (2,3-dihydroxy-3-methylvalerate) into 2-oxo-3-methylpentanoate (2-oxo-3-methylvalerate) and of (2R)-2,3-dihydroxy-3-methylbutanoate (2,3-dihydroxyisovalerate) into 2-oxo-3-methylbutanoate (2-oxoisovalerate), the penultimate precursor to L-isoleucine and L-valine, respectively. This is Dihydroxy-acid dehydratase from Citrifermentans bemidjiense (strain ATCC BAA-1014 / DSM 16622 / JCM 12645 / Bem) (Geobacter bemidjiensis).